The sequence spans 437 residues: MPVSRVKVKNRHLKKKTKKPLAFYKPTTKFVGAVLIAGTLTTTHELLLQQTSPMVQAATNSSEAFIESIAASAKPVADANGLYPSVMIAQAILESNWGSSQLSRAPYYNLFGIQGTYQGKSVVFKTQEYLNGKWVTKDMPFRVYPSFNQSFQDNTYVLKTTNFGNGPYYAKAWRANAATYQDATAALTGKYATDPSYGASLNRIISQYNLTRFDGASSAGNTNSGGSTTTNTNNNSGTNSSSTTYTVKSGDTLWGISQRYGISVAQIQSANNLKSTIIYIGQKLLLTGSASSTNSGGSNNSASTTPTTSVTPAKPASQTSVKVKSGDTLWALSVKYKTSIAQLKSWNHLSSDTIYIGQNLIVSQSAATSNPSTGSGSTATNNSNSTSSNSNASIHKVVKGDTLWGLSQKSGSPIASIKAWNHLSSDTILIGQYLRIK.

The N-terminal stretch at 1 to 57 is a signal peptide; sequence MPVSRVKVKNRHLKKKTKKPLAFYKPTTKFVGAVLIAGTLTTTHELLLQQTSPMVQA. Disordered regions lie at residues 217-244, 291-319, and 367-392; these read SSAG…SSTT, SSTN…ASQT, and ATSN…NSNA. In terms of domain architecture, LysM 1 spans 243-286; that stretch reads TTYTVKSGDTLWGISQRYGISVAQIQSANNLKSTIIYIGQKLLL. Residues 291–317 show a composition bias toward low complexity; sequence SSTNSGGSNNSASTTPTTSVTPAKPAS. Positions 319–362 constitute a LysM 2 domain; the sequence is TSVKVKSGDTLWALSVKYKTSIAQLKSWNHLSSDTIYIGQNLIV. One can recognise a LysM 3 domain in the interval 393–436; it reads SIHKVVKGDTLWGLSQKSGSPIASIKAWNHLSSDTILIGQYLRI.

It belongs to the glycosyl hydrolase 73 family.

It is found in the secreted. It catalyses the reaction Hydrolysis of (1-&gt;4)-beta-linkages between N-acetylmuramic acid and N-acetyl-D-glucosamine residues in a peptidoglycan and between N-acetyl-D-glucosamine residues in chitodextrins.. Its function is as follows. Hydrolyzes the cell wall of L.lactis and M.lysodeikticus. Required for cell separation during growth. In Lactococcus lactis subsp. cremoris (Streptococcus cremoris), this protein is Probable N-acetylmuramidase (acmA).